We begin with the raw amino-acid sequence, 235 residues long: Uridylate kinase (235 aa).

Lys-9–Gly-12 contacts ATP. Gly-51 provides a ligand contact to UMP. ATP contacts are provided by Gly-52 and Arg-56. UMP is bound by residues Asp-71 and Thr-132–Thr-139. ATP-binding residues include Thr-159, Tyr-165, and Asp-168.

This sequence belongs to the UMP kinase family. In terms of assembly, homohexamer.

It is found in the cytoplasm. The enzyme catalyses UMP + ATP = UDP + ADP. It functions in the pathway pyrimidine metabolism; CTP biosynthesis via de novo pathway; UDP from UMP (UMPK route): step 1/1. With respect to regulation, inhibited by UTP. Functionally, catalyzes the reversible phosphorylation of UMP to UDP. This is Uridylate kinase from Flavobacterium psychrophilum (strain ATCC 49511 / DSM 21280 / CIP 103535 / JIP02/86).